The following is a 329-amino-acid chain: Phenylalanine--tRNA ligase alpha subunit (329 aa).

Glutamate 254 lines the Mg(2+) pocket.

The protein belongs to the class-II aminoacyl-tRNA synthetase family. Phe-tRNA synthetase alpha subunit type 1 subfamily. Tetramer of two alpha and two beta subunits. It depends on Mg(2+) as a cofactor.

It localises to the cytoplasm. The catalysed reaction is tRNA(Phe) + L-phenylalanine + ATP = L-phenylalanyl-tRNA(Phe) + AMP + diphosphate + H(+). In Mannheimia succiniciproducens (strain KCTC 0769BP / MBEL55E), this protein is Phenylalanine--tRNA ligase alpha subunit.